Consider the following 1098-residue polypeptide: MEGWEEVSILAAILYSFPASKDPVTSLLFDSVHNLLWCGDSSGSARSFTPNAGYPFQLYPYTKFPATTSPLPVVQQRNHSRGILSLSQNCVNLNSRRGLSQATFTAASVTDSANVLRNLSCMTTLGTGNDIIVGGTHSLGSLDMQKCVATGFDHSGNLSFVDSVAKTLVLGTTDGTVELFDTASNSSVKSFPAHSGLLSDMAVQGNYIATCGYSARRRYDHKNSSAAGGTSYITDPLVHLIDTRMMKSLSPIPFPNGASFVRFHPKLPNIVIVASSTGVLEFVDIFDQSKLNVYQVNMSPASPGISRMEISDNGEYICCSEGRSLHLWSFTSDTNFVNFPAPLEEQDIPAPLPPPFEVDDPVPLSSVGMPYYKDYLLSNYATDMVFTKELSKVPAEVDTSLGHGAFVPYDRTAHGPRNISQPYQSLREPPGSNSNAPRFISERDGESNENMIHAENSIFHLKSPTSVPHCYSRLQIQYSKFGVDDFDFDYYNKSNGACSGLENHLDNSYTNALLQLYRAAPAFYNSVVESLLPEYLPNGPEIISWNPQGSSLLIELGYLFDMMHKAEGRNVKIANFSQLLTQSASAASAGVINTDEEKSLNADGLREIIIRFNHYLLSELTSNQRERRHTNSEKIEDIMGIKLEMQIKSQCTETETHTGSQLIFDLTSPPEQYLNKLAMLRRAEKTEITILSYMDYFMDQYKSASCRECEARGRPHAVNARQRVVRLPKVLSINLSMTNFELQQIHNCRGWLVPEFHIGEDERFVDAGRGRKYELLGYVCEISHGPGVKRGAHNLVSFVKIKGQWYLFNDFLVMPIAQEEALNLSYSWKKPVIIVYSEPGQDFSYFETSTFKKIQDLDTSIIYRDHFVRAAREGHRQEYKLLTKQEAPEIGTLIAIDAEFVVSEPEQLEIRYTGTRKLIKPKKLTLARVSVLRGNGPNIGVPFIDDYIVWTGHIEDYLTSFSGIEPGDLDPEVSKKALVTLQTVYRKLWLLLNMGCVFVGHGLQNDFRCINLVVPKTQVRDTADLFYLPEFKRKLSLKFLAYVLLKEKVQTGNHDSVEDAYTALMLFQKHEELTRTGDLETVLYQVYMEGQQRRFRAP.

WD repeat units follow at residues 19–58 (ASKD…PFQL), 150–190 (TGFD…SVKS), 253–293 (PFPN…KLNV), and 300–338 (PASP…NFVN). The tract at residues 340-466 (PAPLEEQDIP…SIFHLKSPTS (127 aa)) is linker. The interval 417–442 (RNISQPYQSLREPPGSNSNAPRFISE) is disordered. Residues 466-839 (SVPHCYSRLQ…KPVIIVYSEP (374 aa)) enclose the USP domain. The region spanning 894–1067 (IAIDAEFVVS…EDAYTALMLF (174 aa)) is the Exonuclease domain. Residues Asp897, Glu899, Asp1006, and Asp1059 each coordinate a divalent metal cation.

It belongs to the peptidase C19 family. PAN2 subfamily. Forms a heterotrimer with an asymmetric homodimer of the regulatory subunit PAN3 to form the poly(A)-nuclease (PAN) deadenylation complex. It depends on a divalent metal cation as a cofactor.

It is found in the cytoplasm. The catalysed reaction is Exonucleolytic cleavage of poly(A) to 5'-AMP.. With respect to regulation, positively regulated by the regulatory subunit PAN3. Its function is as follows. Catalytic subunit of the poly(A)-nuclease (PAN) deadenylation complex, one of two cytoplasmic mRNA deadenylases involved in mRNA turnover. PAN specifically shortens poly(A) tails of RNA and the activity is stimulated by poly(A)-binding protein PAB1. PAN deadenylation is followed by rapid degradation of the shortened mRNA tails by the CCR4-NOT complex. Deadenylated mRNAs are then degraded by two alternative mechanisms, namely exosome-mediated 3'-5' exonucleolytic degradation, or deadenylation-dependent mRNA decaping and subsequent 5'-3' exonucleolytic degradation by XRN1. May also be involved in post-transcriptional maturation of mRNA poly(A) tails. The protein is PAN2-PAN3 deadenylation complex catalytic subunit PAN2 of Meyerozyma guilliermondii (strain ATCC 6260 / CBS 566 / DSM 6381 / JCM 1539 / NBRC 10279 / NRRL Y-324) (Yeast).